The following is a 664-amino-acid chain: Alcohol oxidase (664 aa).

Residue 8 to 39 coordinates FAD; the sequence is DIIVVGGGSTGCCIAGRLANLDDQNLTVALIE. H568 functions as the Proton acceptor in the catalytic mechanism. The Microbody targeting signal signature appears at 662 to 664; sequence ARF.

The protein belongs to the GMC oxidoreductase family. As to quaternary structure, homooctamer. FAD is required as a cofactor.

It is found in the peroxisome matrix. The catalysed reaction is a primary alcohol + O2 = an aldehyde + H2O2. It participates in energy metabolism; methane degradation. In terms of biological role, catalyzes the oxidation of methanol to formaldehyde and hydrogen peroxide, the first step in the methanol utilization pathway of methylotrophic yeasts. The protein is Alcohol oxidase (MOX) of Pichia angusta (Yeast).